A 367-amino-acid polypeptide reads, in one-letter code: Probable glutamine synthetase (367 aa).

Residues 30–110 (IQATYVWIDG…VMCDTLDHQM (81 aa)) enclose the GS beta-grasp domain. The 251-residue stretch at 117-367 (HRQACAEIMH…TAMIAQSILF (251 aa)) folds into the GS catalytic domain.

The protein belongs to the glutamine synthetase family. In terms of assembly, homooctamer.

It is found in the cytoplasm. It carries out the reaction L-glutamate + NH4(+) + ATP = L-glutamine + ADP + phosphate + H(+). The polypeptide is Probable glutamine synthetase (gln-2) (Caenorhabditis elegans).